The sequence spans 171 residues: Probable deoxyuridine 5'-triphosphate nucleotidohydrolase (171 aa).

The protein belongs to the dCTP deaminase family. Archaeal dUTPase subfamily.

The enzyme catalyses dUTP + H2O = dUMP + diphosphate + H(+). Its pathway is pyrimidine metabolism; dUMP biosynthesis; dUMP from dCTP (dUTP route): step 2/2. Its function is as follows. This enzyme is involved in nucleotide metabolism: it produces dUMP, the immediate precursor of thymidine nucleotides and it decreases the intracellular concentration of dUTP so that uracil cannot be incorporated into DNA. The chain is Probable deoxyuridine 5'-triphosphate nucleotidohydrolase from Methanosarcina barkeri (strain Fusaro / DSM 804).